The following is a 93-amino-acid chain: UPF0358 protein lwe1048 (93 aa).

It belongs to the UPF0358 family.

The chain is UPF0358 protein lwe1048 from Listeria welshimeri serovar 6b (strain ATCC 35897 / DSM 20650 / CCUG 15529 / CIP 8149 / NCTC 11857 / SLCC 5334 / V8).